Here is a 2325-residue protein sequence, read N- to C-terminus: Protein sidekick homolog (2325 aa).

The N-terminal stretch at 1-26 (MRNRLLLIFYTTTVLWTIGYTQLVLG) is a signal peptide. Over 27–2019 (KPPIFQDGGS…IPDDPFYTTW (1993 aa)) the chain is Extracellular. Ig-like C2-type domains follow at residues 28-105 (PPIF…AAIS), 217-319 (PSLQ…AYMT), and 324-397 (PILK…ADLA). 3 disulfides stabilise this stretch: Cys-52–Cys-94, Cys-247–Cys-301, and Cys-345–Cys-386. Residue Asn-407 is glycosylated (N-linked (GlcNAc...) asparagine). 2 consecutive Ig-like C2-type domains span residues 456–544 (PSQK…VQVN) and 547–638 (SLIE…AMLQ). Disulfide bonds link Cys-480–Cys-528 and Cys-568–Cys-622. Residues Asn-632, Asn-655, Asn-807, Asn-868, Asn-932, and Asn-1016 are each glycosylated (N-linked (GlcNAc...) asparagine). 13 consecutive Fibronectin type-III domains span residues 645 to 751 (MPER…MPQQ), 756 to 853 (APRN…TSEG), 858 to 957 (APKN…TEED), 961 to 1055 (SVDE…VPPE), 1059 to 1154 (RPSM…TLQT), 1159 to 1254 (PSQR…TYES), 1259 to 1359 (SPRN…TMED), 1363 to 1457 (PPES…SSVR), 1463 to 1566 (APAP…TLPS), 1571 to 1671 (QPIS…VGYS), 1673 to 1775 (PKRN…DKPG), 1776 to 1872 (PVGI…SKDG), and 1873 to 2004 (PPPP…TEQL). A disordered region spans residues 1036 to 1059 (TRKGDGPVEETKFESGVPPELPGR). The span at 1037 to 1048 (RKGDGPVEETKF) shows a compositional bias: basic and acidic residues. The N-linked (GlcNAc...) asparagine glycan is linked to Asn-1107. Positions 1137–1161 (KGRGAPSEPSRSFETLQTNPDTPSQ) are disordered. Polar residues predominate over residues 1145 to 1161 (PSRSFETLQTNPDTPSQ). Asn-1614 is a glycosylation site (N-linked (GlcNAc...) asparagine). Disordered regions lie at residues 1857 to 1884 (GEQRSANVTIGPSKDGPPPPSKPQITSG) and 1918 to 1947 (PANGYVSQRPRRNEIKGAKSAAQTAAATST). The N-linked (GlcNAc...) asparagine glycan is linked to Asn-1863. The segment covering 1935–1947 (AKSAAQTAAATST) has biased composition (low complexity). A helical membrane pass occupies residues 2020–2040 (WFMALVAMGAFVLIVIIIAIL). Over 2041–2325 (CVTGSSAKYR…NLTTGFSSFV (285 aa)) the chain is Cytoplasmic. Disordered stretches follow at residues 2080 to 2113 (NMTRSRELPTRPGTTQSWVSDQSREPPAYGSVLG), 2164 to 2187 (TAYVTPSARGGSDNGRNEYMPTRS), 2202 to 2226 (RGHIPSSSGGSGAGSQPQGSPLQQP), and 2285 to 2325 (ILTG…SSFV). The segment covering 2091 to 2100 (PGTTQSWVSD) has biased composition (polar residues). Positions 2215–2226 (GSQPQGSPLQQP) are enriched in low complexity. 2 stretches are compositionally biased toward polar residues: residues 2294–2305 (AGRSSTTDSTSE) and 2313–2325 (ATPNLTTGFSSFV).

Belongs to the sidekick family.

It localises to the membrane. Its function is as follows. Cell adhesion protein. This chain is Protein sidekick homolog (rig-4), found in Caenorhabditis elegans.